The following is a 637-amino-acid chain: Epithelial sodium channel subunit alpha (637 aa).

Residues 1–34 (MGTASRGGSVKAEKMPEGEKTRQCKQETEQQQKE) are disordered. At 1–76 (MGTASRGGSV…VCSKKNKMKT (76 aa)) the chain is on the cytoplasmic side. The span at 11 to 34 (KAEKMPEGEKTRQCKQETEQQQKE) shows a compositional bias: basic and acidic residues. Residues 77-97 (AFWSVLFILTFGLMYWQFGIL) form a helical membrane-spanning segment. The Extracellular portion of the chain corresponds to 98-548 (YREYFSYPVN…NQWSLWFGSS (451 aa)). Intrachain disulfides connect cysteine 125/cysteine 292, cysteine 217/cysteine 224, cysteine 269/cysteine 276, cysteine 380/cysteine 465, cysteine 402/cysteine 442, cysteine 402/cysteine 461, cysteine 406/cysteine 457, cysteine 415/cysteine 442, cysteine 415/cysteine 465, and cysteine 417/cysteine 431. Residues 549–569 (VLSVMELAELILDFTVITFIL) form a helical membrane-spanning segment. The Cytoplasmic segment spans residues 570–637 (AFRWFRSKQW…PSKDGETGLE (68 aa)).

Belongs to the amiloride-sensitive sodium channel (TC 1.A.6) family. SCNN1A subfamily. In terms of assembly, heterotrimer; containing an alpha/SCNN1A, a beta/SCNN1B and a gamma/SCNN1G subunit. In terms of tissue distribution, the long isoform has been found in cochlea, colon, and cartilage. The short isoform is only found in cochlea.

It is found in the apical cell membrane. The protein localises to the cell projection. Its subcellular location is the cilium. The protein resides in the cytoplasmic granule. It localises to the cytoplasm. It is found in the cytoplasmic vesicle. The protein localises to the secretory vesicle. Its subcellular location is the acrosome. The protein resides in the flagellum. It carries out the reaction Na(+)(in) = Na(+)(out). With respect to regulation, originally identified and characterized by its inhibition by the diuretic drug amiloride. This is one of the three pore-forming subunits of the heterotrimeric epithelial sodium channel (ENaC), a critical regulator of sodium balance and fluid homeostasis. ENaC operates in epithelial tissues, where it mediates the electrodiffusion of sodium ions from extracellular fluid through the apical membrane of cells, with water following osmotically. In Gallus gallus (Chicken), this protein is Epithelial sodium channel subunit alpha.